Here is a 602-residue protein sequence, read N- to C-terminus: Elongation factor 4 (602 aa).

Residues 8 to 189 enclose the tr-type G domain; it reads KNIRNFSIIA…KIITTIPAPS (182 aa). Residues 20-25 and 136-139 each bind GTP; these read DHGKST and NKID.

Belongs to the TRAFAC class translation factor GTPase superfamily. Classic translation factor GTPase family. LepA subfamily.

It localises to the cell inner membrane. The enzyme catalyses GTP + H2O = GDP + phosphate + H(+). Functionally, required for accurate and efficient protein synthesis under certain stress conditions. May act as a fidelity factor of the translation reaction, by catalyzing a one-codon backward translocation of tRNAs on improperly translocated ribosomes. Back-translocation proceeds from a post-translocation (POST) complex to a pre-translocation (PRE) complex, thus giving elongation factor G a second chance to translocate the tRNAs correctly. Binds to ribosomes in a GTP-dependent manner. The chain is Elongation factor 4 from Helicobacter pylori (strain G27).